Here is a 286-residue protein sequence, read N- to C-terminus: Polyamine aminopropyltransferase (286 aa).

Residues 5–238 enclose the PABS domain; that stretch reads KIWHEKLHRH…GTMMFSWGTD (234 aa). Positions 64 and 88 each coordinate spermidine. Residues Glu108 and 140–141 each bind S-methyl-5'-thioadenosine; that span reads NG. Residue Asp158 is the Proton acceptor of the active site. 158–161 lines the spermidine pocket; that stretch reads DSTD.

It belongs to the spermidine/spermine synthase family. As to quaternary structure, homodimer or homotetramer.

Its subcellular location is the cytoplasm. It carries out the reaction S-adenosyl 3-(methylsulfanyl)propylamine + putrescine = S-methyl-5'-thioadenosine + spermidine + H(+). Its pathway is amine and polyamine biosynthesis; spermidine biosynthesis; spermidine from putrescine: step 1/1. Its function is as follows. Catalyzes the irreversible transfer of a propylamine group from the amino donor S-adenosylmethioninamine (decarboxy-AdoMet) to putrescine (1,4-diaminobutane) to yield spermidine. This chain is Polyamine aminopropyltransferase, found in Buchnera aphidicola subsp. Schizaphis graminum (strain Sg).